Here is a 484-residue protein sequence, read N- to C-terminus: Vanillin dehydrogenase (484 aa).

Residues Trp-156–Asn-157, Lys-180–Ser-183, and Gly-234–Ser-235 contribute to the NADP(+) site. NAD(+)-binding positions include Lys-180 and Gly-234 to Gly-239. Glu-258 (proton acceptor) is an active-site residue. Leu-259 lines the NADP(+) pocket. The active-site Nucleophile is Cys-292. Residues Gln-339 and Glu-386 each contribute to the NAD(+) site. NADP(+) is bound at residue Glu-386.

This sequence belongs to the aldehyde dehydrogenase family. In terms of assembly, exists as a homodimer, homotrimer and homotetramer.

It carries out the reaction vanillin + NAD(+) + H2O = vanillate + NADH + 2 H(+). The enzyme catalyses vanillin + NADP(+) + H2O = vanillate + NADPH + 2 H(+). It catalyses the reaction 3,4-dihydroxybenzaldehyde + NAD(+) + H2O = 3,4-dihydroxybenzoate + NADH + 2 H(+). The catalysed reaction is 3,4-dihydroxybenzaldehyde + NADP(+) + H2O = 3,4-dihydroxybenzoate + NADPH + 2 H(+). It carries out the reaction 4-hydroxybenzaldehyde + NAD(+) + H2O = 4-hydroxybenzoate + NADH + 2 H(+). The enzyme catalyses 4-hydroxybenzaldehyde + NADP(+) + H2O = 4-hydroxybenzoate + NADPH + 2 H(+). Functionally, catalyzes oxidation of vanillin to vanillate. Also oxidizes 3,4-dihydroxybenzaldehyde and 4-hydroxybenzaldehyde significantly. Other aromatic aldehyde substrates in the order of decreasing activity include 3-hydroxybenzaldehyde, 4-nitrobenzaldehyde, terephthalaldehyde, 2,4-dichlorobenzaldehyde, benzaldehyde and 3-phenylpropanal. Low activity with phthalaldehyde, cinnamaldehyde and syringaldehyde. No activity with phenylacetaldehyde, formaldehyde or aldehyde. Active with both NAD(+) and NADP(+). Involved in the degradation pathway of lignin-derived aromatic compounds of plant cell walls. Catalyzes the conversion of vanillin to vanillate due to toxicity of vanillin to the cells. This Corynebacterium glutamicum (strain ATCC 13032 / DSM 20300 / JCM 1318 / BCRC 11384 / CCUG 27702 / LMG 3730 / NBRC 12168 / NCIMB 10025 / NRRL B-2784 / 534) protein is Vanillin dehydrogenase.